Here is a 238-residue protein sequence, read N- to C-terminus: Enolase-phosphatase E1 (238 aa).

The protein belongs to the HAD-like hydrolase superfamily. MasA/MtnC family. As to quaternary structure, monomer. The cofactor is Mg(2+).

The catalysed reaction is 5-methylsulfanyl-2,3-dioxopentyl phosphate + H2O = 1,2-dihydroxy-5-(methylsulfanyl)pent-1-en-3-one + phosphate. Its pathway is amino-acid biosynthesis; L-methionine biosynthesis via salvage pathway; L-methionine from S-methyl-5-thio-alpha-D-ribose 1-phosphate: step 3/6. It participates in amino-acid biosynthesis; L-methionine biosynthesis via salvage pathway; L-methionine from S-methyl-5-thio-alpha-D-ribose 1-phosphate: step 4/6. Functionally, bifunctional enzyme that catalyzes the enolization of 2,3-diketo-5-methylthiopentyl-1-phosphate (DK-MTP-1-P) into the intermediate 2-hydroxy-3-keto-5-methylthiopentenyl-1-phosphate (HK-MTPenyl-1-P), which is then dephosphorylated to form the acireductone 1,2-dihydroxy-3-keto-5-methylthiopentene (DHK-MTPene). The protein is Enolase-phosphatase E1 of Synechococcus elongatus (strain ATCC 33912 / PCC 7942 / FACHB-805) (Anacystis nidulans R2).